The sequence spans 72 residues: uncharacterized protein (72 aa).

This is an uncharacterized protein from Haemophilus influenzae (strain ATCC 51907 / DSM 11121 / KW20 / Rd).